The chain runs to 336 residues: F420-dependent glucose-6-phosphate dehydrogenase (336 aa).

A coenzyme F420-(gamma-Glu)n-binding site is contributed by Asp39. The active-site Proton donor is the His40. Coenzyme F420-(gamma-Glu)n contacts are provided by residues Thr76 and 107-108 (TG). The active-site Proton acceptor is the Glu109. Coenzyme F420-(gamma-Glu)n contacts are provided by residues Asn112, 177 to 178 (GG), and 180 to 181 (VV). Substrate-binding residues include Thr195, Lys198, Lys259, and Arg283.

This sequence belongs to the F420-dependent glucose-6-phosphate dehydrogenase family. In terms of assembly, homodimer.

The enzyme catalyses oxidized coenzyme F420-(gamma-L-Glu)(n) + D-glucose 6-phosphate + H(+) = 6-phospho-D-glucono-1,5-lactone + reduced coenzyme F420-(gamma-L-Glu)(n). Functionally, catalyzes the coenzyme F420-dependent oxidation of glucose 6-phosphate (G6P) to 6-phosphogluconolactone. Appears to have a role in resistance to oxidative stress, via its consumption of G6P that serves as a source of reducing power to combat oxidative stress in mycobacteria. This Mycolicibacterium fortuitum (Mycobacterium fortuitum) protein is F420-dependent glucose-6-phosphate dehydrogenase.